The chain runs to 70 residues: Conotoxin Cal6.11 (70 aa).

Residues 1–22 form the signal peptide; that stretch reads MKLTCVLIIAVLILTACQFIAA. A propeptide spanning residues 23–43 is cleaved from the precursor; the sequence is DNTEYRKWRRSGTSTGMRLGS. Intrachain disulfides connect cysteine 46/cysteine 57, cysteine 50/cysteine 62, and cysteine 56/cysteine 69. A 4-hydroxyproline mark is found at proline 48 and proline 58. 4-carboxyglutamate is present on residues glutamate 60 and glutamate 67.

It belongs to the conotoxin O1 superfamily. In terms of tissue distribution, expressed by the venom duct.

It localises to the secreted. In terms of biological role, probable neurotoxin with unknown target. Possibly targets ion channels. This Californiconus californicus (California cone) protein is Conotoxin Cal6.11.